Reading from the N-terminus, the 89-residue chain is UPF0145 protein MJ1170 (89 aa).

This sequence belongs to the UPF0145 family. Highly divergent.

The chain is UPF0145 protein MJ1170 from Methanocaldococcus jannaschii (strain ATCC 43067 / DSM 2661 / JAL-1 / JCM 10045 / NBRC 100440) (Methanococcus jannaschii).